Consider the following 89-residue polypeptide: Large ribosomal subunit protein bL27 (89 aa).

The tract at residues 1 to 22 is disordered; sequence MAHKKAGGSSRNGRDSESKRLG.

This sequence belongs to the bacterial ribosomal protein bL27 family.

The polypeptide is Large ribosomal subunit protein bL27 (Bartonella tribocorum (strain CIP 105476 / IBS 506)).